Here is a 438-residue protein sequence, read N- to C-terminus: ATP-dependent RNA helicase RhlB (438 aa).

Positions 9–37 (QRFADLPLHPEVKQALAENGFEFCTPIQA) match the Q motif motif. The Helicase ATP-binding domain maps to 40–219 (LPVLLQSKDI…YDHMNEPVKV (180 aa)). 53–60 (AQTGTGKT) lines the ATP pocket. A DEAD box motif is present at residues 165–168 (DEAD). The Helicase C-terminal domain maps to 243–390 (KMRLLLTLIE…VSNYDSEALL (148 aa)). The disordered stretch occupies residues 395-438 (TPAKIHRKHPSGTRNLRDRSGTSRPGAQRSGARPPRHDRTRRHS). Residues 428-438 (PPRHDRTRRHS) show a composition bias toward basic residues.

The protein belongs to the DEAD box helicase family. RhlB subfamily. Component of the RNA degradosome, which is a multiprotein complex involved in RNA processing and mRNA degradation.

The protein localises to the cytoplasm. The catalysed reaction is ATP + H2O = ADP + phosphate + H(+). In terms of biological role, DEAD-box RNA helicase involved in RNA degradation. Has RNA-dependent ATPase activity and unwinds double-stranded RNA. The sequence is that of ATP-dependent RNA helicase RhlB from Shewanella baltica (strain OS223).